Reading from the N-terminus, the 497-residue chain is MAGVRLSLLKSIQRSIKPHATAKSCSGLLNSHARAFTCGNLLDGPKASPSMISFSSNIRLHNDAKPFNYLGHSSYARAFSSKSDDFGSIVASGVTGSGDGNGNGNDWVEKAKDVLQTSVDAVTETAKKTKDVSDEMIPHVQQFLDSNPYLKDVIVPVSLTMTGTLFAWVVMPRILRRFHTYAMQSSAKLLPVGFSNEDVPYEKSFWGALEDPARYLVTFIAFAQIAAMVAPTTIAAQYFSPTVKGAVILSLVWFLYRWKTNVITRMLSAKSFGGLDREKVLTLDKVSSVGLFAIGLMASAEACGVAVQSILTVGGVGGVATAFAARDILGNVLSGLSMQFSRPFSMGDTIKAGSVEGQVIEMGLTTTSLLNAEKFPVLVPNSLFSSQVIVNKSRAQWRAIASKIPLQIDDLDMIPQISNEIKEMLRSNTKVFLGKEAPHCYLSRVEKSFAELTIGCNLIRMGKEELYNTQQEVLLEAVKIIKKHGVSLGTTWDNSTL.

The N-terminal 86 residues, 1 to 86 (MAGVRLSLLK…RAFSSKSDDF (86 aa)), are a transit peptide targeting the mitochondrion. Transmembrane regions (helical) follow at residues 152-172 (DVIV…VVMP), 216-236 (LVTF…TIAA), 238-258 (YFSP…LYRW), 280-300 (VLTL…MASA), and 305-325 (VAVQ…AFAA).

This sequence belongs to the MscS (TC 1.A.23) family.

The protein localises to the mitochondrion membrane. Functionally, mechanosensitive channel that opens in response to stretch forces in the membrane lipid bilayer. The chain is Mechanosensitive ion channel protein 1, mitochondrial (MSL1) from Arabidopsis thaliana (Mouse-ear cress).